We begin with the raw amino-acid sequence, 103 residues long: ESAT-6-like protein EsxF (103 aa).

Belongs to the WXG100 family. CFP-10 subfamily.

The protein localises to the secreted. The protein is ESAT-6-like protein EsxF of Mycobacterium tuberculosis (strain CDC 1551 / Oshkosh).